Here is a 621-residue protein sequence, read N- to C-terminus: GPI-anchor transamidase component GPAA1 (621 aa).

Residues Met-1–Arg-19 are Cytoplasmic-facing. A helical membrane pass occupies residues Leu-20–Phe-41. Residues Pro-42–Ser-370 lie on the Lumenal side of the membrane. A 2-acyl-6-[6-phosphoethanolamine-alpha-D-mannosyl-(1-&gt;2)-6-phosphoethanolamine-alpha-D-mannosyl-(1-&gt;6)-2-phosphoethanolamine-alpha-D-mannosyl-(1-&gt;4)-alpha-D-glucosaminyl]-1-(1-radyl,2-acyl-sn-glycero-3-phospho)-1D-myo-inositol-binding residues include Tyr-49 and Ser-51. A glycan (N-linked (GlcNAc...) asparagine) is linked at Asn-203. Cys-259 and Cys-266 are disulfide-bonded. A 2-acyl-6-[6-phosphoethanolamine-alpha-D-mannosyl-(1-&gt;2)-6-phosphoethanolamine-alpha-D-mannosyl-(1-&gt;6)-2-phosphoethanolamine-alpha-D-mannosyl-(1-&gt;4)-alpha-D-glucosaminyl]-1-(1-radyl,2-acyl-sn-glycero-3-phospho)-1D-myo-inositol-binding residues include His-354, Gln-355, and Ser-356. Gln-355 contributes to the Mg(2+) binding site. Residues Ile-371–Trp-393 traverse the membrane as a helical segment. Residues Met-394 to Ala-425 are Cytoplasmic-facing. A helical membrane pass occupies residues Ser-426–His-450. Over Leu-451–Glu-462 the chain is Lumenal. Residues Ala-463–His-483 form a helical membrane-spanning segment. Topologically, residues Arg-484–Trp-495 are cytoplasmic. Helical transmembrane passes span Met-496–Ser-519 and Leu-520–Lys-536. Residues Pro-537–Pro-540 are Cytoplasmic-facing. A helical transmembrane segment spans residues Arg-541–Leu-563. Residues Trp-564–Ala-597 are Lumenal-facing. The chain crosses the membrane as a helical span at residues Leu-598–Phe-619. Topologically, residues Trp-620–Lys-621 are cytoplasmic.

Heteropentamer. Part of the GPI-anchor transamidase complex, consisting of PIGK, PIGT, PIGS, PIGU and GAA1. Interacts with PIGK. In terms of tissue distribution, ubiquitously expressed in fetal and adult tissues. Expressed at higher levels in fetal tissues than adult tissues. In embryos abundant in the choroid plexus, skeletal muscle,.

It is found in the endoplasmic reticulum membrane. Its pathway is glycolipid biosynthesis; glycosylphosphatidylinositol-anchor biosynthesis. Its function is as follows. Component of the glycosylphosphatidylinositol-anchor (GPI-anchor) transamidase (GPI-T) complex that catalyzes the formation of the linkage between a proprotein and a GPI-anchor and participates in GPI anchored protein biosynthesis. Binds GPI-anchor. In Mus musculus (Mouse), this protein is GPI-anchor transamidase component GPAA1.